The following is a 743-amino-acid chain: Extensin-2 (743 aa).

The N-terminal stretch at 1–22 is a signal peptide; sequence MGPSAHLISALGVIIMATMVAA. Residues 46–93 are disordered; the sequence is TPPLPYVDSSPPPTYTPAPEVEYKSPPPPYVYSSPPPPTYSPSPKVDY. 2 stretches are compositionally biased toward pro residues: residues 47–61 and 70–86; these read PPLPYVDSSPPPTYT and SPPPPYVYSSPPPPTYS. 47 consecutive repeat copies span residues 70 to 78, 79 to 94, 95 to 103, 104 to 119, 120 to 128, 129 to 144, 145 to 153, 154 to 169, 170 to 178, 179 to 194, 195 to 203, 204 to 219, 220 to 228, 229 to 244, 245 to 253, 254 to 269, 270 to 278, 279 to 294, 295 to 303, 304 to 319, 320 to 328, 329 to 344, 345 to 353, 354 to 369, 370 to 378, 379 to 394, 395 to 403, 404 to 419, 420 to 428, 429 to 444, 445 to 453, 454 to 469, 470 to 478, 479 to 494, 495 to 503, 504 to 519, 520 to 528, 529 to 544, 545 to 553, 554 to 569, 570 to 578, 579 to 594, 595 to 603, 604 to 619, 620 to 628, 629 to 644, and 645 to 660. Residues 70-628 form a 23 X 9 AA repeats of S-P-P-P-P-Y-V-Y-[SN] region; that stretch reads SPPPPYVYSS…KSPPPPYVYS (559 aa). The tract at residues 79-660 is 24 X 16 AA repeats of S-P-P-P-P-[YT]-Y-S-P-S-P-K-V-[DEYH]-Y-K; sequence SPPPPTYSPS…YSPSPKVYYK (582 aa). The segment at 715-743 is disordered; the sequence is PPSYYSPSPKVEYKSPPPPSYSPSPKTEY.

It belongs to the extensin family. Post-translationally, extensins contain a characteristic repeat of the pentapeptide Ser-Pro(4). The proline residues are hydroxylated and then O-glycosylated (arabinosylation). Synthetised as soluble proteins which become insolubilised in the cell wall through the intermolecular cross-linking of Tyr on adjacent monomers. Isodityrosine (IDT) stabilizes and makes rigid the part of the polypeptide where IDT functional sites are present. In terms of tissue distribution, predominantly expressed in the roots.

It is found in the secreted. The protein resides in the primary cell wall. In terms of biological role, structural component which strengthens the primary cell wall. This is Extensin-2 from Arabidopsis thaliana (Mouse-ear cress).